Consider the following 242-residue polypeptide: NAD-dependent protein deacetylase 1 (242 aa).

A Deacetylase sirtuin-type domain is found at 1–242 (MTITSWLAAS…LNEQLAEVDP (242 aa)). 8 residues coordinate NAD(+): A19, T23, F30, R31, Q97, V99, D100, and H115. F30 contacts nicotinamide. Nicotinamide contacts are provided by V99 and D100. Residue H115 is the Proton acceptor of the active site. Zn(2+)-binding residues include C123, C126, C142, and C144. NAD(+) is bound by residues S182, S183, N207, and I226.

It belongs to the sirtuin family. Class U subfamily. It depends on Zn(2+) as a cofactor.

The protein resides in the cytoplasm. It carries out the reaction N(6)-acetyl-L-lysyl-[protein] + NAD(+) + H2O = 2''-O-acetyl-ADP-D-ribose + nicotinamide + L-lysyl-[protein]. Functionally, NAD-dependent protein deacetylase which modulates the activities of several enzymes which are inactive in their acetylated form. The protein is NAD-dependent protein deacetylase 1 of Geobacillus kaustophilus (strain HTA426).